The following is a 325-amino-acid chain: Mitochondrial amidoxime-reducing component 1 (325 aa).

Over 1–16 (MDLKEAFATIFDQNRK) the chain is Mitochondrial matrix. A helical; Signal-anchor for type II membrane protein membrane pass occupies residues 17 to 36 (VALYAAGTTVAVLGLGLVFK). Topologically, residues 37–325 (YMRREEKLTR…VGEPVYKITY (289 aa)) are cytoplasmic. 3 residues coordinate Mo-molybdopterin: Lys59, Ser60, and Arg84. Positions 85-175 (HWLVITEDGH…ADKPVRLVHY (91 aa)) are MOSC N-terminal region. The region spanning 179–323 (LKPQRPHEKE…LHVGEPVYKI (145 aa)) is the MOSC domain. 4 residues coordinate Mo-molybdopterin: Arg230, Arg264, Cys265, and Tyr305.

The cofactor is Mo-molybdopterin.

The protein resides in the mitochondrion outer membrane. The protein localises to the membrane. The catalysed reaction is N(omega)-hydroxy-L-arginine + 2 Fe(II)-[cytochrome b5] + 2 H(+) = L-arginine + 2 Fe(III)-[cytochrome b5] + H2O. Its function is as follows. Catalyzes the reduction of N-oxygenated molecules, acting as a counterpart of cytochrome P450 and flavin-containing monooxygenases in metabolic cycles. As a component of prodrug-converting system, reduces a multitude of N-hydroxylated prodrugs particularly amidoximes, leading to increased drug bioavailability. May be involved in mitochondrial N(omega)-hydroxy-L-arginine (NOHA) reduction, regulating endogenous nitric oxide levels and biosynthesis. Postulated to cleave the N-OH bond of N-hydroxylated substrates in concert with electron transfer from NADH to cytochrome b5 reductase then to cytochrome b5, the ultimate electron donor that primes the active site for substrate reduction. The protein is Mitochondrial amidoxime-reducing component 1 (mtarc1) of Danio rerio (Zebrafish).